The sequence spans 361 residues: GTP 3',8-cyclase (361 aa).

The disordered stretch occupies residues 1–30 (MTVTALGLPTVARSTGDGSAGASPAPADGP). Residues 16-30 (GDGSAGASPAPADGP) are compositionally biased toward low complexity. Positions 34 to 252 (TYGRAATDLR…LQQHFELTPD (219 aa)) constitute a Radical SAM core domain. Arg-43 provides a ligand contact to GTP. The [4Fe-4S] cluster site is built by Cys-50 and Cys-54. Tyr-56 provides a ligand contact to S-adenosyl-L-methionine. A [4Fe-4S] cluster-binding site is contributed by Cys-57. A GTP-binding site is contributed by Arg-94. Residue Gly-98 participates in S-adenosyl-L-methionine binding. Thr-125 is a GTP binding site. Ser-149 contacts S-adenosyl-L-methionine. Lys-186 contributes to the GTP binding site. Met-220 lines the S-adenosyl-L-methionine pocket. Residues Cys-288 and Cys-291 each contribute to the [4Fe-4S] cluster site. 293 to 295 (RTR) is a GTP binding site. Cys-305 is a binding site for [4Fe-4S] cluster.

This sequence belongs to the radical SAM superfamily. MoaA family. As to quaternary structure, monomer and homodimer. [4Fe-4S] cluster is required as a cofactor.

It carries out the reaction GTP + AH2 + S-adenosyl-L-methionine = (8S)-3',8-cyclo-7,8-dihydroguanosine 5'-triphosphate + 5'-deoxyadenosine + L-methionine + A + H(+). The protein operates within cofactor biosynthesis; molybdopterin biosynthesis. Its function is as follows. Catalyzes the cyclization of GTP to (8S)-3',8-cyclo-7,8-dihydroguanosine 5'-triphosphate. The sequence is that of GTP 3',8-cyclase from Mycolicibacterium smegmatis (strain ATCC 700084 / mc(2)155) (Mycobacterium smegmatis).